We begin with the raw amino-acid sequence, 261 residues long: Putative glyoxylase CFP32 (261 aa).

VOC domains are found at residues 11–129 (TPNW…LWQA) and 143–257 (TLIW…VLKP). Glyoxalase regions lie at residues 13–123 (NWVD…TGAA) and 149–252 (LLTD…GAIF).

In Mycobacterium bovis (strain ATCC BAA-935 / AF2122/97), this protein is Putative glyoxylase CFP32.